The sequence spans 137 residues: Large ribosomal subunit protein uL16 (137 aa).

Belongs to the universal ribosomal protein uL16 family. Part of the 50S ribosomal subunit.

Binds 23S rRNA and is also seen to make contacts with the A and possibly P site tRNAs. This is Large ribosomal subunit protein uL16 from Oleidesulfovibrio alaskensis (strain ATCC BAA-1058 / DSM 17464 / G20) (Desulfovibrio alaskensis).